Here is a 450-residue protein sequence, read N- to C-terminus: tRNA modification GTPase MnmE (450 aa).

Arg-23, Glu-79, and Lys-118 together coordinate (6S)-5-formyl-5,6,7,8-tetrahydrofolate. In terms of domain architecture, TrmE-type G spans 214–374; it reads GITLILVGKP…LKEHILNKVG (161 aa). A K(+)-binding site is contributed by Asn-224. GTP contacts are provided by residues 224 to 229, 243 to 249, and 268 to 271; these read NAGKSS, TSIAGTT, and DTAG. Ser-228 contacts Mg(2+). Residues Thr-243, Ile-245, and Thr-248 each contribute to the K(+) site. Position 249 (Thr-249) interacts with Mg(2+). Residue Lys-450 coordinates (6S)-5-formyl-5,6,7,8-tetrahydrofolate.

Belongs to the TRAFAC class TrmE-Era-EngA-EngB-Septin-like GTPase superfamily. TrmE GTPase family. As to quaternary structure, homodimer. Heterotetramer of two MnmE and two MnmG subunits. Requires K(+) as cofactor.

It is found in the cytoplasm. In terms of biological role, exhibits a very high intrinsic GTPase hydrolysis rate. Involved in the addition of a carboxymethylaminomethyl (cmnm) group at the wobble position (U34) of certain tRNAs, forming tRNA-cmnm(5)s(2)U34. This chain is tRNA modification GTPase MnmE, found in Francisella tularensis subsp. holarctica (strain OSU18).